Here is a 291-residue protein sequence, read N- to C-terminus: UPF0276 protein VV1_0952 (291 aa).

Belongs to the UPF0276 family.

This is UPF0276 protein VV1_0952 from Vibrio vulnificus (strain CMCP6).